A 684-amino-acid chain; its full sequence is Ubinuclein-1 (684 aa).

5 disordered regions span residues 108 to 137 (YKGN…FIDD), 157 to 287 (YVNR…LGKS), 311 to 332 (NVTG…VKSK), 609 to 631 (MVDR…CNPT), and 660 to 684 (PQTR…NLPS). Acidic residues predominate over residues 114–137 (SDGEELDGAPDDDEYDTEDSFIDD). Composition is skewed to basic and acidic residues over residues 157–167 (YVNRGKLERME) and 184–199 (SAKP…DKHT). Residues 211–235 (STAPGSWKTQESPLPSGAQDANTSV) are compositionally biased toward polar residues. A compositionally biased stretch (basic and acidic residues) spans 238-260 (DDVKHSDRANHQSRNDTSHKSRE). Polar residues-rich tracts occupy residues 261–284 (TGSS…TSLL), 311–321 (NVTGSRQSSQA), 611–631 (DRSN…CNPT), and 669–684 (QNLN…NLPS).

Belongs to the ubinuclein family. Component of the HIRA complex made of UBN1, UBN2, ASF1A, CABIN1 and HIRA. Interacts with HIRA.

The protein resides in the nucleus. It is found in the nucleolus. Functionally, may be required for replication-independent chromatin assembly. The sequence is that of Ubinuclein-1 from Arabidopsis thaliana (Mouse-ear cress).